The chain runs to 200 residues: Probable molybdenum cofactor guanylyltransferase (200 aa).

GTP is bound by residues Leu9–Gly11, Lys21, Asp69, and Asp100. Asp100 provides a ligand contact to Mg(2+).

It belongs to the MobA family. Mg(2+) is required as a cofactor.

Its subcellular location is the cytoplasm. It catalyses the reaction Mo-molybdopterin + GTP + H(+) = Mo-molybdopterin guanine dinucleotide + diphosphate. In terms of biological role, transfers a GMP moiety from GTP to Mo-molybdopterin (Mo-MPT) cofactor (Moco or molybdenum cofactor) to form Mo-molybdopterin guanine dinucleotide (Mo-MGD) cofactor. The sequence is that of Probable molybdenum cofactor guanylyltransferase from Bacillus thuringiensis (strain Al Hakam).